Here is a 367-residue protein sequence, read N- to C-terminus: Probable butyrate kinase (367 aa).

The protein belongs to the acetokinase family.

Its subcellular location is the cytoplasm. The enzyme catalyses butanoate + ATP = butanoyl phosphate + ADP. The chain is Probable butyrate kinase from Bacillus cereus (strain ATCC 10987 / NRS 248).